The chain runs to 393 residues: Nuclear hormone receptor family member nhr-90 (393 aa).

Residues 6-79 (LQTCKICGAE…AGMKIEYFQH (74 aa)) constitute a DNA-binding region (nuclear receptor). The NR C4-type zinc finger occupies 9-30 (CKICGAENTRGNHFGVQCCRAC). The NR C4-type; degenerate zinc-finger motif lies at 47–62 (CLSVHCGEAARFCKPC). The NR LBD domain occupies 121 to 388 (DLNSLVGKAS…FSHPEMFIDT (268 aa)).

It belongs to the nuclear hormone receptor family.

Its subcellular location is the nucleus. In terms of biological role, orphan nuclear receptor. This is Nuclear hormone receptor family member nhr-90 (nhr-90) from Caenorhabditis elegans.